The chain runs to 528 residues: Protein spinster homolog 1 (528 aa).

The interval 1–49 (MAGSDTAPFLSQADDPDDGPVPGTPGLPGSTGNPKSEEPEVPDQEGLQR) is disordered. A2 bears the N-acetylalanine mark. 12 helical membrane-spanning segments follow: residues 50-70 (ITGLSPGRSALIVAVLCYINL), 98-118 (GLIQTVFISSYMVLAPVFGYL), 127-147 (LMCGGIAFWSLVTLGSSFIPG), 160-180 (VGVGEASYSTIAPTLIADLFV), 187-207 (MLSIFYFAIPVGSGLGYIAGS), 218-238 (WALRVTPGLGVVAVLLLFLVV), 278-298 (LGFTAVAFVTGSLALWAPAFL), 323-343 (LIFGLITCLTGVLGVGLGVEI), 357-377 (LVCATGLLGSAPFLFLSLACA), 381-401 (IVATYIFIFIGETLLSMNWAI), 421-441 (FQIVLSHLLGDAGSPYLIGLI), and 465-485 (MLCAFVGALGGAAFLGTAIFI). Residue S518 is modified to Phosphoserine.

The protein belongs to the major facilitator superfamily. Spinster (TC 2.A.1.49) family. As to quaternary structure, interacts with BCL2 and BCL2L1.

It is found in the lysosome membrane. The protein localises to the mitochondrion inner membrane. The enzyme catalyses a 1-acyl-sn-glycero-3-phosphocholine(out) + H(+)(out) = a 1-acyl-sn-glycero-3-phosphocholine(in) + H(+)(in). It catalyses the reaction 1-hexadecanoyl-sn-glycero-3-phosphocholine(out) + H(+)(out) = 1-hexadecanoyl-sn-glycero-3-phosphocholine(in) + H(+)(in). The catalysed reaction is 1-(9Z-octadecenoyl)-sn-glycero-3-phosphocholine(out) + H(+)(out) = 1-(9Z-octadecenoyl)-sn-glycero-3-phosphocholine(in) + H(+)(in). It carries out the reaction 1-(5Z,8Z,11Z,14Z-eicosatetraenoyl)-sn-glycero-3-phosphocholine(out) + H(+)(out) = 1-(5Z,8Z,11Z,14Z-eicosatetraenoyl)-sn-glycero-3-phosphocholine(in) + H(+)(in). The enzyme catalyses 1-(4Z,7Z,10Z,13Z,16Z,19Z-docosahexaenoyl)-sn-glycero-3-phosphocholine(out) + H(+)(out) = 1-(4Z,7Z,10Z,13Z,16Z,19Z-docosahexaenoyl)-sn-glycero-3-phosphocholine(in) + H(+)(in). It catalyses the reaction a 1-acyl-sn-glycero-3-phosphoethanolamine(out) + H(+)(out) = a 1-acyl-sn-glycero-3-phosphoethanolamine(in) + H(+)(in). The catalysed reaction is 1-(9Z-octadecenoyl)-sn-glycero-3-phosphoethanolamine(out) + H(+)(out) = 1-(9Z-octadecenoyl)-sn-glycero-3-phosphoethanolamine(in) + H(+)(in). It carries out the reaction 1-acyl-sn-glycero-3-phospho-(1'-sn-glycerol)(out) + H(+)(out) = 1-acyl-sn-glycero-3-phospho-(1'-sn-glycerol)(in) + H(+)(in). The enzyme catalyses 1-(9Z-octadecenoyl)-sn-glycero-3-phospho-(1'-sn-glycerol)(out) + H(+)(out) = 1-(9Z-octadecenoyl)-sn-glycero-3-phospho-(1'-sn-glycerol)(in) + H(+)(in). It catalyses the reaction a 1-O-(1Z-alkenyl)-sn-glycero-3-phosphocholine(out) + H(+)(out) = a 1-O-(1Z-alkenyl)-sn-glycero-3-phosphocholine(in) + H(+)(in). The catalysed reaction is 1-(1Z-hexadecenyl)-sn-glycero-3-phosphocholine(out) + H(+)(out) = 1-(1Z-hexadecenyl)-sn-glycero-3-phosphocholine(in) + H(+)(in). It carries out the reaction a 1-O-(1Z-alkenyl)-sn-glycero-3-phosphoethanolamine(out) + H(+)(out) = a 1-O-(1Z-alkenyl)-sn-glycero-3-phosphoethanolamine(in) + H(+)(in). The enzyme catalyses 1-O-(1Z-hexadecenyl)-sn-glycero-3-phosphoethanolamine(out) + H(+)(out) = 1-O-(1Z-hexadecenyl)-sn-glycero-3-phosphoethanolamine(in) + H(+)(in). In terms of biological role, plays a critical role in the phospholipid salvage pathway from lysosomes to the cytosol. Mediates the rate-limiting, proton-dependent, lysosomal efflux of lysophospholipids, which can then be reacylated by acyltransferases in the endoplasmic reticulum to form phospholipids. Selective for zwitterionic headgroups such as lysophosphatidylcholine (LPC) and lysophosphatidylethanolamine (LPE), can also transport lysophosphatidylglycerol (LPG), but not other anionic lysophospholipids, sphingosine, nor sphingomyelin. Transports lysophospholipids with saturated, monounsaturated, and polyunsaturated fatty acids, such as 1-hexadecanoyl-sn-glycero-3-phosphocholine, 1-(9Z-octadecenoyl)-sn-glycero-3-phosphocholine and 1-(4Z,7Z,10Z,13Z,16Z,19Z-docosahexaenoyl)-sn-glycero-3-phosphocholine, respectively. Can also transport lysoplasmalogen (LPC with a fatty alcohol) such as 1-(1Z-hexadecenyl)-sn-glycero-3-phosphocholine. Lysosomal LPC could function as intracellular signaling messenger. Essential player in lysosomal homeostasis. Crucial for cell survival under conditions of nutrient limitation. May be involved in necrotic or autophagic cell death. The polypeptide is Protein spinster homolog 1 (SPNS1) (Homo sapiens (Human)).